Here is a 316-residue protein sequence, read N- to C-terminus: Glutamyl endopeptidase (316 aa).

The N-terminal stretch at 1 to 30 (MVSKKSVKRGLITGLIGISIYSLGMHPAQA) is a signal peptide. The propeptide occupies 31 to 94 (APSPHTPVSS…SPAKAPYSIK (64 aa)). A disulfide bond links Cys126 and Cys142. Residues His141 and Ser261 each act as charge relay system in the active site. Cys275 and Cys279 are oxidised to a cystine.

This sequence belongs to the peptidase S1B family.

Its subcellular location is the secreted. The catalysed reaction is Preferential cleavage: Glu-|-Xaa, Asp-|-Xaa.. Functionally, specific for hydrolysis of peptide bonds on the carboxyl side of acidic amino acid residues, with a strong preference for Glu. The sequence is that of Glutamyl endopeptidase (blaSE) from Bacillus licheniformis (strain ATCC 14580 / DSM 13 / JCM 2505 / CCUG 7422 / NBRC 12200 / NCIMB 9375 / NCTC 10341 / NRRL NRS-1264 / Gibson 46).